A 311-amino-acid chain; its full sequence is uncharacterized protein (311 aa).

A run of 9 helical transmembrane segments spans residues 11-31 (LDNWLFVAPALLLAVLSGYLS), 34-54 (VGIVNIAINGGMVFGGMFLSL), 72-92 (LAISIPLSVIFASAVGFLFGI), 101-121 (HVIVGTGVNLLGTGINFFVAQ), 147-167 (IEGIAIFAFAIIFVLLVWYLM), 198-218 (WFGVMASTMVAALAGCCFALS), 233-253 (GFIAIAIMIISMWRIIPSIVI), 257-277 (FALAYVLTTGVVGNANNTYLL), and 279-299 (TIPFIISLLVMMVFGYLNVGP).

The protein localises to the cell membrane. This is an uncharacterized protein from Mycoplasma pneumoniae (strain ATCC 29342 / M129 / Subtype 1) (Mycoplasmoides pneumoniae).